The chain runs to 305 residues: Heterogeneous nuclear ribonucleoprotein A0 (305 aa).

Met1 is modified (N-acetylmethionine). Residues 7 to 86 (CKLFIGGLNV…VELKRAVSRE (80 aa)) form the RRM 1 domain. The residue at position 68 (Ser68) is a Phosphoserine. Lys80 participates in a covalent cross-link: Glycyl lysine isopeptide (Lys-Gly) (interchain with G-Cter in SUMO2). At Ser84 the chain carries Phosphoserine; by MAPKAPK2. Residues Lys96, Lys98, Lys99, and Lys106 each participate in a glycyl lysine isopeptide (Lys-Gly) (interchain with G-Cter in SUMO2) cross-link. The RRM 2 domain maps to 98–175 (KKLFVGGLKG…HRVEVKKAVP (78 aa)). Position 133 is an N6-acetyllysine (Lys133). Arg139 bears the Omega-N-methylarginine mark. Residues Lys154, Lys159, Lys172, and Lys176 each participate in a glycyl lysine isopeptide (Lys-Gly) (interchain with G-Cter in SUMO2) cross-link. Disordered regions lie at residues 174–214 (VPKE…KGGG) and 262–305 (QSSY…GSSF). Gly residues-rich tracts occupy residues 181 to 200 (SGGG…GRGR) and 269 to 281 (KSGG…GSSW). Phosphoserine is present on Ser188. Arg284 carries the omega-N-methylarginine modification. Residues 290–305 (YRGGYGGGGGYGGSSF) are compositionally biased toward gly residues. Position 291 is an asymmetric dimethylarginine; alternate (Arg291). Position 291 is a dimethylated arginine; alternate (Arg291). Arg291 bears the Omega-N-methylarginine; alternate mark.

Post-translationally, phosphorylated at Ser-84 by MAPKAPK2 in response to LPS treatment, promoting stabilization of GADD45A mRNA. Arg-291 is dimethylated, probably to asymmetric dimethylarginine.

The protein resides in the nucleus. Functionally, mRNA-binding component of ribonucleosomes. Specifically binds AU-rich element (ARE)-containing mRNAs. Involved in post-transcriptional regulation of cytokines mRNAs. This Homo sapiens (Human) protein is Heterogeneous nuclear ribonucleoprotein A0 (HNRNPA0).